A 605-amino-acid polypeptide reads, in one-letter code: Poly(3-hydroxyalkanoate) polymerase (605 aa).

Positions 319–527 (IETAIDMIGV…VLAGSGHIAG (209 aa)) constitute an AB hydrolase-1 domain. Residue Cys-341 is part of the active site.

The protein belongs to the PHA/PHB synthase family.

It is found in the cytoplasm. This Methylorubrum extorquens (Methylobacterium dichloromethanicum) protein is Poly(3-hydroxyalkanoate) polymerase (phaC).